The sequence spans 381 residues: 3-dehydroquinate synthase (381 aa).

NAD(+) is bound by residues 81-86 (EGEVSK), 115-119 (GVVGD), 139-140 (TS), Lys152, and Lys161. Positions 194, 256, and 274 each coordinate Zn(2+).

It belongs to the sugar phosphate cyclases superfamily. Dehydroquinate synthase family. Requires Co(2+) as cofactor. It depends on Zn(2+) as a cofactor. NAD(+) serves as cofactor.

Its subcellular location is the cytoplasm. The enzyme catalyses 7-phospho-2-dehydro-3-deoxy-D-arabino-heptonate = 3-dehydroquinate + phosphate. It functions in the pathway metabolic intermediate biosynthesis; chorismate biosynthesis; chorismate from D-erythrose 4-phosphate and phosphoenolpyruvate: step 2/7. In terms of biological role, catalyzes the conversion of 3-deoxy-D-arabino-heptulosonate 7-phosphate (DAHP) to dehydroquinate (DHQ). In Rhodopseudomonas palustris (strain BisA53), this protein is 3-dehydroquinate synthase.